Here is a 71-residue protein sequence, read N- to C-terminus: Large ribosomal subunit protein bL31 (71 aa).

Zn(2+) is bound by residues Cys-16, Cys-18, Cys-36, and Cys-39.

This sequence belongs to the bacterial ribosomal protein bL31 family. Type A subfamily. In terms of assembly, part of the 50S ribosomal subunit. The cofactor is Zn(2+).

Its function is as follows. Binds the 23S rRNA. The polypeptide is Large ribosomal subunit protein bL31 (Petrotoga mobilis (strain DSM 10674 / SJ95)).